Here is a 30-residue protein sequence, read N- to C-terminus: Cyclotide psyleio E (30 aa).

The segment at residues 1-30 (SVTPIVCGETCFGGTCNTPGCSCSWPICTK) is a cross-link (cyclopeptide (Ser-Lys)). Intrachain disulfides connect Cys-7–Cys-21, Cys-11–Cys-23, and Cys-16–Cys-28.

In terms of processing, this is a cyclic peptide.

In terms of biological role, probably participates in a plant defense mechanism. The polypeptide is Cyclotide psyleio E (Psychotria leiocarpa).